The primary structure comprises 969 residues: RNA polymerase-associated protein RapA (969 aa).

A Helicase ATP-binding domain is found at 164-334 (EVGRRHAPRV…FARLRLLDPD (171 aa)). 177-184 (DEVGLGKT) is a binding site for ATP. Residues 280 to 283 (DEAH) carry the DEAH box motif. The region spanning 492–646 (RVNWLLEKVK…TCPTGRAVYD (155 aa)) is the Helicase C-terminal domain.

The protein belongs to the SNF2/RAD54 helicase family. RapA subfamily. Interacts with the RNAP. Has a higher affinity for the core RNAP than for the holoenzyme. Its ATPase activity is stimulated by binding to RNAP.

Functionally, transcription regulator that activates transcription by stimulating RNA polymerase (RNAP) recycling in case of stress conditions such as supercoiled DNA or high salt concentrations. Probably acts by releasing the RNAP, when it is trapped or immobilized on tightly supercoiled DNA. Does not activate transcription on linear DNA. Probably not involved in DNA repair. This chain is RNA polymerase-associated protein RapA, found in Vibrio campbellii (strain ATCC BAA-1116).